The primary structure comprises 311 residues: Protease HtpX homolog 1 (311 aa).

2 helical membrane-spanning segments follow: residues 12 to 32 (IIAL…IINF) and 35 to 55 (FPVI…WLIS). His-137 serves as a coordination point for Zn(2+). Glu-138 is a catalytic residue. His-141 provides a ligand contact to Zn(2+). The next 2 membrane-spanning stretches (helical) occupy residues 159–179 (ILGF…IFAV) and 184–204 (ILVG…TFFL). Position 216 (Glu-216) interacts with Zn(2+).

The protein belongs to the peptidase M48B family. The cofactor is Zn(2+).

The protein resides in the cell membrane. The protein is Protease HtpX homolog 1 of Sulfurisphaera tokodaii (strain DSM 16993 / JCM 10545 / NBRC 100140 / 7) (Sulfolobus tokodaii).